A 1148-amino-acid chain; its full sequence is Phospholipid-transporting ATPase IB (1148 aa).

Over 1–44 (MSRATSVGDQLEAPARIIYLNQSHLNKFCDNRISTAKYSVLTFL) the chain is Cytoplasmic. T5 carries the post-translational modification Phosphothreonine. A helical transmembrane segment spans residues 45-66 (PRFLYEQIRRAANAFFLFIALL). Over 67 to 71 (QQIPD) the chain is Exoplasmic loop. The helical transmembrane segment at 72–94 (VSPTGRYTTLVPLVIILTIAGIK) threads the bilayer. Over 95-276 (EIIEDFKRHK…SNVEKVTNVQ (182 aa)) the chain is Cytoplasmic. A helical membrane pass occupies residues 277-298 (ILVLFGILLVMALVSSVGALFW). At 299–323 (NGSHGGKSWYIKKMDTNSDNFGYNL) the chain is on the exoplasmic loop side. The helical transmembrane segment at 324–345 (LTFIILYNNLIPISLLVTLEVV) threads the bilayer. Over 346 to 837 (KYTQALFINW…GAWSYNRVTK (492 aa)) the chain is Cytoplasmic. D388 serves as the catalytic 4-aspartylphosphate intermediate. D388, K389, T390, E488, F529, K552, R585, T665, G666, D667, R755, and K761 together coordinate ATP. D388 is a binding site for Mg(2+). A Mg(2+)-binding site is contributed by T390. Position 781 (D781) interacts with Mg(2+). The ATP site is built by N784 and D785. D785 lines the Mg(2+) pocket. The chain crosses the membrane as a helical span at residues 838-858 (CILYCFYKNVVLYIIELWFAF). Residues 859–870 (VNGFSGQILFER) are Exoplasmic loop-facing. Residues 871–890 (WCIGLYNVIFTALPPFTLGI) form a helical membrane-spanning segment. Residues 891-920 (FERSCTQESMLRFPQLYRITQNAEGFNTKV) lie on the Cytoplasmic side of the membrane. Residues 921 to 942 (FWGHCINALVHSLILFWVPMKA) traverse the membrane as a helical segment. The Exoplasmic loop portion of the chain corresponds to 943–956 (LEHDTPVTSGHATD). The chain crosses the membrane as a helical span at residues 957 to 979 (YLFVGNIVYTYVVVTVCLKAGLE). Residues 980–985 (TTAWTK) lie on the Cytoplasmic side of the membrane. A helical membrane pass occupies residues 986 to 1006 (FSHLAVWGSMLIWLVFFGVYS). Residues 1007-1024 (TIWPTIPIAPDMKGQATM) lie on the Exoplasmic loop side of the membrane. Residues 1025–1049 (VLSSAYFWLGLFLVPTACLIEDVAW) form a helical membrane-spanning segment. Topologically, residues 1050–1148 (RAAKHTCKKT…DTTKENSRKK (99 aa)) are cytoplasmic.

It belongs to the cation transport ATPase (P-type) (TC 3.A.3) family. Type IV subfamily. As to quaternary structure, component of a P4-ATPase flippase complex which consists of a catalytic alpha subunit and an accessory beta subunit. Interacts with TMEM30A to form a flippase complex. Mg(2+) is required as a cofactor. Found in testis, heart and brain. Most abundant in testis. Also detected in fetal tissues. Expressed in retinal photoreceptor cells; detected in retina outer nuclear layer and inner segment (at protein level).

It is found in the membrane. Its subcellular location is the golgi apparatus membrane. The protein resides in the endosome membrane. It localises to the cell membrane. The protein localises to the photoreceptor outer segment membrane. It is found in the photoreceptor inner segment membrane. It catalyses the reaction ATP + H2O + phospholipidSide 1 = ADP + phosphate + phospholipidSide 2.. It carries out the reaction a 1,2-diacyl-sn-glycero-3-phospho-L-serine(out) + ATP + H2O = a 1,2-diacyl-sn-glycero-3-phospho-L-serine(in) + ADP + phosphate + H(+). The enzyme catalyses a 1,2-diacyl-sn-glycero-3-phosphoethanolamine(in) + ATP + H2O = a 1,2-diacyl-sn-glycero-3-phosphoethanolamine(out) + ADP + phosphate + H(+). In terms of biological role, catalytic component of a P4-ATPase flippase complex which catalyzes the hydrolysis of ATP coupled to the transport of aminophospholipids from the outer to the inner leaflet of various membranes and ensures the maintenance of asymmetric distribution of phospholipids. Able to translocate phosphatidylserine, but not phosphatidylcholine. Phospholipid translocation also seems to be implicated in vesicle formation and in uptake of lipid signaling molecules. Reconstituted to liposomes, the ATP8A2:TMEM30A flippase complex predominantly transports phosphatidylserine (PS) and to a lesser extent phosphatidylethanolamine (PE). Phospholipid translocation is not associated with a countertransport of an inorganic ion or other charged substrate from the cytoplasmic side toward the exoplasm in connection with the phosphorylation from ATP. ATP8A2:TMEM30A may be involved in regulation of neurite outgrowth. Proposed to function in the generation and maintenance of phospholipid asymmetry in photoreceptor disk membranes and neuronal axon membranes. May be involved in vesicle trafficking in neuronal cells. Required for normal visual and auditory function; involved in photoreceptor and inner ear spiral ganglion cell survival. The sequence is that of Phospholipid-transporting ATPase IB from Mus musculus (Mouse).